Consider the following 699-residue polypeptide: Elongation factor G (699 aa).

A tr-type G domain is found at 10 to 292 (NRTRNIGIMA…AVIDYLPSPT (283 aa)). Residues 19-26 (AHIDAGKT), 90-94 (DTPGH), and 144-147 (NKMD) contribute to the GTP site. Residues 292-312 (TDVPAIRGEEDDGSEGSRSAS) are disordered.

The protein belongs to the TRAFAC class translation factor GTPase superfamily. Classic translation factor GTPase family. EF-G/EF-2 subfamily.

It localises to the cytoplasm. Its function is as follows. Catalyzes the GTP-dependent ribosomal translocation step during translation elongation. During this step, the ribosome changes from the pre-translocational (PRE) to the post-translocational (POST) state as the newly formed A-site-bound peptidyl-tRNA and P-site-bound deacylated tRNA move to the P and E sites, respectively. Catalyzes the coordinated movement of the two tRNA molecules, the mRNA and conformational changes in the ribosome. The sequence is that of Elongation factor G from Coxiella burnetii (strain CbuG_Q212) (Coxiella burnetii (strain Q212)).